Here is an 80-residue protein sequence, read N- to C-terminus: Cytochrome c oxidase subunit 7B, mitochondrial (80 aa).

A mitochondrion-targeting transit peptide spans 1 to 24; it reads MFPLAKNALSRLRVQSIQQAVARQ. Residues 25–32 lie on the Mitochondrial matrix side of the membrane; it reads IHQKRAPD. The chain crosses the membrane as a helical span at residues 33–59; it reads FHDKYGNAVLASGATFCVAVWVYMATQ. Topologically, residues 60–80 are mitochondrial intermembrane; that stretch reads IGIEWNPSPVGRVTPKEWREQ.

It belongs to the cytochrome c oxidase VIIb family. As to quaternary structure, component of the cytochrome c oxidase (complex IV, CIV), a multisubunit enzyme composed of 14 subunits. The complex is composed of a catalytic core of 3 subunits MT-CO1, MT-CO2 and MT-CO3, encoded in the mitochondrial DNA, and 11 supernumerary subunits COX4I1 (or COX4I2), COX5A, COX5B, COX6A2 (or COX6A1), COX6B1 (or COX6B2), COX6C, COX7A1 (or COX7A2), COX7B, COX7C, COX8B and NDUFA4, which are encoded in the nuclear genome. The complex exists as a monomer or a dimer and forms supercomplexes (SCs) in the inner mitochondrial membrane with NADH-ubiquinone oxidoreductase (complex I, CI) and ubiquinol-cytochrome c oxidoreductase (cytochrome b-c1 complex, complex III, CIII), resulting in different assemblies (supercomplex SCI(1)III(2)IV(1) and megacomplex MCI(2)III(2)IV(2)).

Its subcellular location is the mitochondrion inner membrane. Its pathway is energy metabolism; oxidative phosphorylation. Its function is as follows. Component of the cytochrome c oxidase, the last enzyme in the mitochondrial electron transport chain which drives oxidative phosphorylation. The respiratory chain contains 3 multisubunit complexes succinate dehydrogenase (complex II, CII), ubiquinol-cytochrome c oxidoreductase (cytochrome b-c1 complex, complex III, CIII) and cytochrome c oxidase (complex IV, CIV), that cooperate to transfer electrons derived from NADH and succinate to molecular oxygen, creating an electrochemical gradient over the inner membrane that drives transmembrane transport and the ATP synthase. Cytochrome c oxidase is the component of the respiratory chain that catalyzes the reduction of oxygen to water. Electrons originating from reduced cytochrome c in the intermembrane space (IMS) are transferred via the dinuclear copper A center (CU(A)) of subunit 2 and heme A of subunit 1 to the active site in subunit 1, a binuclear center (BNC) formed by heme A3 and copper B (CU(B)). The BNC reduces molecular oxygen to 2 water molecules using 4 electrons from cytochrome c in the IMS and 4 protons from the mitochondrial matrix. Plays a role in proper central nervous system (CNS) development in vertebrates. The protein is Cytochrome c oxidase subunit 7B, mitochondrial (COX7B) of Bos taurus (Bovine).